The chain runs to 252 residues: 2-succinyl-6-hydroxy-2,4-cyclohexadiene-1-carboxylate synthase (252 aa).

It belongs to the AB hydrolase superfamily. MenH family. Monomer.

It catalyses the reaction 5-enolpyruvoyl-6-hydroxy-2-succinyl-cyclohex-3-ene-1-carboxylate = (1R,6R)-6-hydroxy-2-succinyl-cyclohexa-2,4-diene-1-carboxylate + pyruvate. It participates in quinol/quinone metabolism; 1,4-dihydroxy-2-naphthoate biosynthesis; 1,4-dihydroxy-2-naphthoate from chorismate: step 3/7. The protein operates within quinol/quinone metabolism; menaquinone biosynthesis. In terms of biological role, catalyzes a proton abstraction reaction that results in 2,5-elimination of pyruvate from 2-succinyl-5-enolpyruvyl-6-hydroxy-3-cyclohexene-1-carboxylate (SEPHCHC) and the formation of 2-succinyl-6-hydroxy-2,4-cyclohexadiene-1-carboxylate (SHCHC). This is 2-succinyl-6-hydroxy-2,4-cyclohexadiene-1-carboxylate synthase from Escherichia coli O81 (strain ED1a).